The sequence spans 210 residues: Large ribosomal subunit protein uL3 (210 aa).

The segment at 119-143 is disordered; it reads GYQGNIKKDGQSRGPMAHGSRYHRR.

It belongs to the universal ribosomal protein uL3 family. As to quaternary structure, part of the 50S ribosomal subunit. Forms a cluster with proteins L14 and L19.

In terms of biological role, one of the primary rRNA binding proteins, it binds directly near the 3'-end of the 23S rRNA, where it nucleates assembly of the 50S subunit. This is Large ribosomal subunit protein uL3 from Lacticaseibacillus casei (strain BL23) (Lactobacillus casei).